The primary structure comprises 61 residues: Small ribosomal subunit protein uS14 (61 aa).

Cysteine 24, cysteine 27, cysteine 40, and cysteine 43 together coordinate Zn(2+).

The protein belongs to the universal ribosomal protein uS14 family. Zinc-binding uS14 subfamily. As to quaternary structure, part of the 30S ribosomal subunit. Contacts proteins S3 and S10. Requires Zn(2+) as cofactor.

Its function is as follows. Binds 16S rRNA, required for the assembly of 30S particles and may also be responsible for determining the conformation of the 16S rRNA at the A site. The protein is Small ribosomal subunit protein uS14 of Thermosipho africanus (strain TCF52B).